The sequence spans 153 residues: Catabolic 3-dehydroquinase (153 aa).

Tyr-24 acts as the Proton acceptor in catalysis. Residues Asn-75, His-81, and Asp-88 each coordinate substrate. His-101 functions as the Proton donor in the catalytic mechanism. Residues 102-103 (VS) and Arg-112 each bind substrate.

Belongs to the type-II 3-dehydroquinase family. As to quaternary structure, homododecamer. Adopts a ring-like structure, composed of an arrangement of two hexameric rings stacked on top of one another.

The catalysed reaction is 3-dehydroquinate = 3-dehydroshikimate + H2O. It functions in the pathway aromatic compound metabolism; 3,4-dihydroxybenzoate biosynthesis; 3,4-dihydroxybenzoate from 3-dehydroquinate: step 1/2. Its function is as follows. Is involved in the catabolism of quinate. Allows the utilization of quinate as carbon source via the beta-ketoadipate pathway. The sequence is that of Catabolic 3-dehydroquinase from Emericella nidulans (strain FGSC A4 / ATCC 38163 / CBS 112.46 / NRRL 194 / M139) (Aspergillus nidulans).